The following is a 146-amino-acid chain: Small ribosomal subunit protein bS6 (146 aa).

The tract at residues 106–146 is disordered; sequence QAAATQRAAERRAQREAERNAAQAQSSASNQARTAATTSGK. A compositionally biased stretch (basic and acidic residues) spans 113–124; it reads AAERRAQREAER. Low complexity predominate over residues 125–146; the sequence is NAAQAQSSASNQARTAATTSGK.

This sequence belongs to the bacterial ribosomal protein bS6 family.

In terms of biological role, binds together with bS18 to 16S ribosomal RNA. This is Small ribosomal subunit protein bS6 from Oenococcus oeni (strain ATCC BAA-331 / PSU-1).